Here is a 116-residue protein sequence, read N- to C-terminus: MANHFRTDRVGMEIKREVNEILQKKVRDPRVQGVTITDVQMLGDLSVAKVYYTILSNLASDNQKVQIGLEKATGTIKRELGRNLKLYKIPDLTFVKDESIEYGNKIDEMLRNLDKN.

The protein belongs to the RbfA family. In terms of assembly, monomer. Binds 30S ribosomal subunits, but not 50S ribosomal subunits or 70S ribosomes.

The protein localises to the cytoplasm. Functionally, one of several proteins that assist in the late maturation steps of the functional core of the 30S ribosomal subunit. Associates with free 30S ribosomal subunits (but not with 30S subunits that are part of 70S ribosomes or polysomes). Required for efficient processing of 16S rRNA. May interact with the 5'-terminal helix region of 16S rRNA. The sequence is that of Ribosome-binding factor A from Streptococcus pneumoniae (strain Hungary19A-6).